The following is a 517-amino-acid chain: Serine hydroxymethyltransferase 1, mitochondrial (517 aa).

The N-terminal 31 residues, 1–31 (MAMALALRRLSSSADKPLQRLFNGGHLYSMS), are a transit peptide targeting the mitochondrion. An N6-(pyridoxal phosphate)lysine modification is found at Lys-287.

It belongs to the SHMT family. As to quaternary structure, homotetramer. The cofactor is pyridoxal 5'-phosphate.

It is found in the mitochondrion. The enzyme catalyses (6R)-5,10-methylene-5,6,7,8-tetrahydrofolate + glycine + H2O = (6S)-5,6,7,8-tetrahydrofolate + L-serine. It functions in the pathway one-carbon metabolism; tetrahydrofolate interconversion. Functionally, catalyzes the interconversion of serine and glycine. The sequence is that of Serine hydroxymethyltransferase 1, mitochondrial from Flaveria pringlei.